The primary structure comprises 180 residues: ATP-dependent protease subunit HslV (180 aa).

The active site involves T6. Na(+) contacts are provided by A164, C167, and T170.

Belongs to the peptidase T1B family. HslV subfamily. In terms of assembly, a double ring-shaped homohexamer of HslV is capped on each side by a ring-shaped HslU homohexamer. The assembly of the HslU/HslV complex is dependent on binding of ATP.

The protein resides in the cytoplasm. The catalysed reaction is ATP-dependent cleavage of peptide bonds with broad specificity.. Its activity is regulated as follows. Allosterically activated by HslU binding. Protease subunit of a proteasome-like degradation complex believed to be a general protein degrading machinery. This chain is ATP-dependent protease subunit HslV, found in Borrelia hermsii (strain HS1 / DAH).